The sequence spans 198 residues: Holliday junction branch migration complex subunit RuvA (198 aa).

Residues 1-63 are domain I; that stretch reads MYSYIIGVIT…EDASILYGFS (63 aa). Residues 64–142 form a domain II region; the sequence is SQKERELFNL…KDFVPSEKPV (79 aa). The flexible linker stretch occupies residues 143 to 153; the sequence is NKEVKRSNDSE. The segment at 153-198 is domain III; it reads EFAREALLQLGYFKNDVDAFIENTDISGLSIEDIMKKAMKSLDSSR.

Belongs to the RuvA family. Homotetramer. Forms an RuvA(8)-RuvB(12)-Holliday junction (HJ) complex. HJ DNA is sandwiched between 2 RuvA tetramers; dsDNA enters through RuvA and exits via RuvB. An RuvB hexamer assembles on each DNA strand where it exits the tetramer. Each RuvB hexamer is contacted by two RuvA subunits (via domain III) on 2 adjacent RuvB subunits; this complex drives branch migration. In the full resolvosome a probable DNA-RuvA(4)-RuvB(12)-RuvC(2) complex forms which resolves the HJ.

It localises to the cytoplasm. The RuvA-RuvB-RuvC complex processes Holliday junction (HJ) DNA during genetic recombination and DNA repair, while the RuvA-RuvB complex plays an important role in the rescue of blocked DNA replication forks via replication fork reversal (RFR). RuvA specifically binds to HJ cruciform DNA, conferring on it an open structure. The RuvB hexamer acts as an ATP-dependent pump, pulling dsDNA into and through the RuvAB complex. HJ branch migration allows RuvC to scan DNA until it finds its consensus sequence, where it cleaves and resolves the cruciform DNA. The protein is Holliday junction branch migration complex subunit RuvA of Finegoldia magna (strain ATCC 29328 / DSM 20472 / WAL 2508) (Peptostreptococcus magnus).